A 500-amino-acid chain; its full sequence is Aldehyde dehydrogenase (500 aa).

246–251 (GSTLVG) is a binding site for NAD(+). Catalysis depends on E269, which acts as the Proton acceptor. C303 acts as the Nucleophile in catalysis.

It belongs to the aldehyde dehydrogenase family.

The catalysed reaction is an aldehyde + NAD(+) + H2O = a carboxylate + NADH + 2 H(+). The protein operates within alcohol metabolism; ethanol degradation; acetate from ethanol: step 2/2. The chain is Aldehyde dehydrogenase (aldA) from Agaricus bisporus (White button mushroom).